A 319-amino-acid chain; its full sequence is Beta-ketoacyl-[acyl-carrier-protein] synthase III (319 aa).

Active-site residues include C110 and H246. Residues 247–251 (QANYR) form an ACP-binding region. N276 is a catalytic residue.

It belongs to the thiolase-like superfamily. FabH family. As to quaternary structure, homodimer.

The protein resides in the cytoplasm. It carries out the reaction malonyl-[ACP] + acetyl-CoA + H(+) = 3-oxobutanoyl-[ACP] + CO2 + CoA. Its pathway is lipid metabolism; fatty acid biosynthesis. In terms of biological role, catalyzes the condensation reaction of fatty acid synthesis by the addition to an acyl acceptor of two carbons from malonyl-ACP. Catalyzes the first condensation reaction which initiates fatty acid synthesis and may therefore play a role in governing the total rate of fatty acid production. Possesses both acetoacetyl-ACP synthase and acetyl transacylase activities. Its substrate specificity determines the biosynthesis of branched-chain and/or straight-chain of fatty acids. The chain is Beta-ketoacyl-[acyl-carrier-protein] synthase III from Lactobacillus delbrueckii subsp. bulgaricus (strain ATCC BAA-365 / Lb-18).